Here is a 154-residue protein sequence, read N- to C-terminus: Myoglobin (154 aa).

Positions glycine 2–lysine 148 constitute a Globin domain. Serine 4 bears the Phosphoserine mark. Histidine 65 is a binding site for nitrite. Histidine 65 is a binding site for O2. Threonine 68 is modified (phosphothreonine). Residue histidine 94 coordinates heme b.

It belongs to the globin family. In terms of assembly, monomeric.

The protein resides in the cytoplasm. The protein localises to the sarcoplasm. It catalyses the reaction Fe(III)-heme b-[protein] + nitric oxide + H2O = Fe(II)-heme b-[protein] + nitrite + 2 H(+). It carries out the reaction H2O2 + AH2 = A + 2 H2O. Functionally, monomeric heme protein which primary function is to store oxygen and facilitate its diffusion within muscle tissues. Reversibly binds oxygen through a pentacoordinated heme iron and enables its timely and efficient release as needed during periods of heightened demand. Depending on the oxidative conditions of tissues and cells, and in addition to its ability to bind oxygen, it also has a nitrite reductase activity whereby it regulates the production of bioactive nitric oxide. Under stress conditions, like hypoxia and anoxia, it also protects cells against reactive oxygen species thanks to its pseudoperoxidase activity. This Ziphius cavirostris (Cuvier's beaked whale) protein is Myoglobin (MB).